The chain runs to 175 residues: Large ribosomal subunit protein uL18 (175 aa).

This sequence belongs to the universal ribosomal protein uL18 family. As to quaternary structure, part of the 50S ribosomal subunit. Contacts the 5S and 23S rRNAs.

Its function is as follows. This is one of the proteins that bind and probably mediate the attachment of the 5S RNA into the large ribosomal subunit, where it forms part of the central protuberance. The chain is Large ribosomal subunit protein uL18 from Methanoculleus marisnigri (strain ATCC 35101 / DSM 1498 / JR1).